The sequence spans 298 residues: Glutamyl-Q tRNA(Asp) synthetase (298 aa).

Residues R9–S13 and E45 contribute to the L-glutamate site. The short motif at P12–S22 is the 'HIGH' region element. Residues C101, C103, Y115, and C119 each coordinate Zn(2+). L-glutamate is bound by residues Y172 and R190. A 'KMSKS' region motif is present at residues K228–Q232. ATP is bound at residue K231.

The protein belongs to the class-I aminoacyl-tRNA synthetase family. GluQ subfamily. It depends on Zn(2+) as a cofactor.

Its function is as follows. Catalyzes the tRNA-independent activation of glutamate in presence of ATP and the subsequent transfer of glutamate onto a tRNA(Asp). Glutamate is transferred on the 2-amino-5-(4,5-dihydroxy-2-cyclopenten-1-yl) moiety of the queuosine in the wobble position of the QUC anticodon. The protein is Glutamyl-Q tRNA(Asp) synthetase of Salmonella choleraesuis (strain SC-B67).